Consider the following 563-residue polypeptide: Cystathionine gamma-synthase-like protein ankD (563 aa).

The interval 1–37 (MGELGPASAQHGSDSISFSGSYTQPLGAPQPPNEPHA) is disordered. Residues 10–24 (QHGSDSISFSGSYTQ) show a composition bias toward polar residues.

This sequence belongs to the trans-sulfuration enzymes family. MET7 subfamily. It depends on pyridoxal 5'-phosphate as a cofactor.

It carries out the reaction cyclo(L-arginyl-(Z)-dehydro-3,4-dihydroxytyrosyl) + O-acetyl-L-homoserine = cyclo(L-arginyl-(Z)-dehydro-4-O-homoseryl-tyrosyl) + acetate + H(+). The protein operates within secondary metabolite biosynthesis. In terms of biological role, cystathionine gamma-synthase-like protein; part of the ank cluster that mediates the biosynthesis of NK13650 C, a highly modified cyclo-arginine-tyrosine dipeptide. AnkD catalyzes the attachment of L-homoserine moiety using O-acetyl-L-homoserine as co-substrate. Within the pathway, the cyclodipeptide synthase ankA acts as the scaffold-generating enzyme and is responsible for formation of the cyclo-Arg-Tyr diketopiperazine (cRY) from L-Arg and L-Tyr. The ankA product cRY is desaturated by the cytochrome P450 monooxygenase ankB to yield a dehydro-cyclodipeptide intermediate. The FAD-dependent monooxygenase ankC then installs the m-OH, ankD catalyzes the attachment of L-homoserine, and ankE ligates citrate to the ankD product to yield NK13650 B. The O-methyltransferase ankF is responsible for methylation of the C-17 phenol group of NK13650 B to produce NK13650 D. Amidation of NK13650 D with L-Asp by ankG then leads to the production of NK13650 C, whereas amidation of NK13650 B produces NK13650 A. The chain is Cystathionine gamma-synthase-like protein ankD from Aspergillus thermomutatus (Neosartorya pseudofischeri).